A 368-amino-acid polypeptide reads, in one-letter code: Membrane glycoprotein UL18 (368 aa).

Positions 1–19 (MMTMWCLTLFVLWMLRVVG) are cleaved as a signal peptide. Residues 326-346 (ISSVLLALLLCALLFAFLHYF) form a helical membrane-spanning segment.

As to quaternary structure, interacts with host LILRB1.

It localises to the host membrane. Functionally, plays a role in the protection against host NK cell cytotoxicity by interacting with and modulating the activity of the host inhibitory leukocyte Ig-like receptor 1/LILRB1, which is expressed on monocytes, dendritic cells, as well as subsets of T and NK cells. UL18 exerts an inhibitory effect on LIR-1+ NK cells, while it stimulates LIR-1- NK cell. The chain is Membrane glycoprotein UL18 (UL18) from Homo sapiens (Human).